Here is a 249-residue protein sequence, read N- to C-terminus: Demethylmenaquinone methyltransferase (249 aa).

S-adenosyl-L-methionine is bound by residues threonine 67, aspartate 87, and 115–116 (DA).

The protein belongs to the class I-like SAM-binding methyltransferase superfamily. MenG/UbiE family.

It catalyses the reaction a 2-demethylmenaquinol + S-adenosyl-L-methionine = a menaquinol + S-adenosyl-L-homocysteine + H(+). It participates in quinol/quinone metabolism; menaquinone biosynthesis; menaquinol from 1,4-dihydroxy-2-naphthoate: step 2/2. Its function is as follows. Methyltransferase required for the conversion of demethylmenaquinol (DMKH2) to menaquinol (MKH2). The chain is Demethylmenaquinone methyltransferase from Leptospira interrogans serogroup Icterohaemorrhagiae serovar copenhageni (strain Fiocruz L1-130).